We begin with the raw amino-acid sequence, 240 residues long: Uridylate kinase (240 aa).

Residue K12–G15 coordinates ATP. Positions G20–G25 are involved in allosteric activation by GTP. A UMP-binding site is contributed by G54. Residues G55 and R59 each coordinate ATP. Residues D74 and T135–T142 each bind UMP. ATP is bound by residues N163, Y169, and D172.

This sequence belongs to the UMP kinase family. In terms of assembly, homohexamer.

The protein resides in the cytoplasm. It catalyses the reaction UMP + ATP = UDP + ADP. The protein operates within pyrimidine metabolism; CTP biosynthesis via de novo pathway; UDP from UMP (UMPK route): step 1/1. Its activity is regulated as follows. Allosterically activated by GTP. Inhibited by UTP. In terms of biological role, catalyzes the reversible phosphorylation of UMP to UDP. The sequence is that of Uridylate kinase from Bacillus anthracis.